A 3165-amino-acid chain; its full sequence is ORFB polyprotein (3165 aa).

The region spanning 271–418 is the Peptidase C8 domain; that stretch reads MARSIGLSHE…LENEPDILVG (148 aa). Catalysis depends on for papain-like protease p48 activity residues C341 and H388. Residues 453-472 form a disordered region; sequence AEPGQRAKDNTNPSTPRPIE. The next 6 membrane-spanning stretches (helical) occupy residues 791 to 811, 823 to 843, 1166 to 1186, 1193 to 1213, 1215 to 1235, and 1356 to 1376; these read IMIA…YVPY, YILL…GYAC, AGLF…AAIM, KYLV…KALW, FPIF…VSVY, and ALGF…LRPP. The RNA-directed RNA polymerase stretch occupies residues 1793–2208; that stretch reads FYKSRKALKQ…AEDSADYRAW (416 aa). Helical transmembrane passes span 2495–2515, 2517–2537, and 2590–2610; these read VRIY…MHWV, LFIQ…WSFW, and LGIV…EVLF. The Helicase ATP-binding domain occupies 2651–2796; it reads ATKAIEHGHV…IPFLEPTLPK (146 aa). 2664 to 2671 lines the ATP pocket; the sequence is AKTASGKS. A DEFH box motif is present at residues 2751–2754; the sequence is DEFH.

It in the C-terminal section; belongs to the DEAD box helicase family. Post-translationally, papain-like protease p48 is autocatalytically processed. The putative RNA-directed RNA polymerase/helicase may be further processed.

The protein localises to the host membrane. The enzyme catalyses RNA(n) + a ribonucleoside 5'-triphosphate = RNA(n+1) + diphosphate. It carries out the reaction ATP + H2O = ADP + phosphate + H(+). In terms of biological role, papain-like protease p48 is a cysteine protease of the peptidase family C8. The polypeptide is ORFB polyprotein (Cryphonectria hypovirus 1 (strain EP713) (CHV-1/EP713)).